Reading from the N-terminus, the 198-residue chain is Cyclin-dependent kinase inhibitor 1B (198 aa).

Over residues 1-11 (MSNVRVSNGSP) the composition is skewed to polar residues. The segment at 1 to 34 (MSNVRVSNGSPSLERMDARQAEHPKPSACRNLFG) is disordered. The residue at position 10 (Ser-10) is a Phosphoserine; by UHMK1. Basic and acidic residues predominate over residues 14 to 25 (ERMDARQAEHPK). The interval 51 to 91 (DMEEASQRKWNFDFQNHKPLEGKYEWQEVEKGSLPEFYYRP) is interaction with CDK2. Position 74 is a phosphotyrosine; by SRC (Tyr-74). Residues 85–198 (PEFYYRPPRP…KKPGLRRRQT (114 aa)) form a disordered region. Tyr-88 bears the Phosphotyrosine; by ABL, LYN, SRC and JAK2 mark. Phosphotyrosine is present on Tyr-89. Over residues 126-137 (EDTHLVDPKTDP) the composition is skewed to basic and acidic residues. A Nuclear localization signal motif is present at residues 153–169 (KRPATDDSSTQNKRANR). Phosphothreonine; by CaMK1, PKB/AKT1 and PIM1 is present on Thr-157. At Thr-170 the chain carries Phosphothreonine. A compositionally biased stretch (polar residues) spans 175 to 186 (SDGSPNAGSVEQ). Thr-187 carries the phosphothreonine; by PKB/AKT1, CDK1 and CDK2 modification. Phosphothreonine; by CaMK1, PKB/AKT1, RPS6KA1, RPS6KA3 and PIM1 is present on Thr-198.

It belongs to the CDI family. As to quaternary structure, forms a ternary complex composed of CCNE1, CDK2 and CDKN1B. Interacts directly with CCNE1; the interaction is inhibited by CDK2-dependent phosphorylation on Thr-187. Interacts with COPS5, subunit of the COP9 signalosome complex; the interaction leads to CDKN1B degradation. Interacts with NUP50; the interaction leads to nuclear import and degradation of phosphorylated CDKN1B. Interacts with CCND1 and SNX6. Interacts (Thr-198-phosphorylated form) with 14-3-3 proteins, binds strongly YWHAQ, weakly YWHAE and YWHAH, but not YWHAB nor YWHAZ; the interaction with YWHAQ results in translocation to the cytoplasm. Interacts with AKT1 and LYN; the interactions lead to cytoplasmic mislocation, phosphorylation of CDKN1B and inhibition of cell cycle arrest. Forms a ternary complex with CCNA2 and CDK2; CDKN1B inhibits the kinase activity of CDK2 through conformational rearrangements. Interacts (unphosphorylated form) with CDK2. Forms a complex with CDK2 and SPDYA, but does not directly interact with SPDYA. Forms a ternary complex composed of cyclin D, CDK4 and CDKN1B. Interacts (phosphorylated on Tyr-88 and Tyr-89) with CDK4; the interaction is required for cyclin D and CDK4 complex assembly, induces nuclear translocation and activates the CDK4 kinase activity. Interacts with GRB2. Interacts with PIM1. Identified in a complex with SKP1, SKP2 and CKS1B. Interacts with UHMK1; the interaction leads to cytoplasmic mislocation, phosphorylation of CDKN1B and inhibition of cell cycle arrest. Also interacts with CDK1. Dephosphorylated on Thr-187 by PPM1H, leading to CDKN1B stability. Interacts with HSPA8; the interaction may be associated with susceptibility to ubiquitination. Post-translationally, phosphorylated; phosphorylation occurs on serine, threonine and tyrosine residues. Phosphorylation on Ser-10 is the major site of phosphorylation in resting cells, takes place at the G(0)-G(1) phase and leads to protein stability. Phosphorylation on other sites is greatly enhanced by mitogens, growth factors, cMYC and in certain cancer cell lines. The phosphorylated form found in the cytoplasm is inactivate. Phosphorylation on Thr-198 is required for interaction with 14-3-3 proteins. Phosphorylation on Thr-187, by CDK1 and CDK2 leads to protein ubiquitination and proteasomal degradation. Tyrosine phosphorylation promotes this process. Phosphorylation by PKB/AKT1 can be suppressed by LY294002, an inhibitor of the catalytic subunit of PI3K. Phosphorylation on Tyr-88 and Tyr-89 has no effect on binding CDK2, but is required for binding CDK4. Dephosphorylated on tyrosine residues by G-CSF. In terms of processing, ubiquitinated; in the cytoplasm by the KPC complex (composed of RNF123/KPC1 and UBAC1/KPC2) and, in the nucleus, by SCF(SKP2). The latter requires prior phosphorylation on Thr-187. Ubiquitinated; by a TRIM21-containing SCF(SKP2)-like complex; leads to its degradation. Subject to degradation in the lysosome. Interaction with SNX6 promotes lysosomal degradation. In terms of tissue distribution, expressed in kidney (at protein level). Expressed in all tissues tested. Highest levels in skeletal muscle, lowest in liver and kidney.

The protein localises to the nucleus. Its subcellular location is the cytoplasm. It is found in the endosome. Important regulator of cell cycle progression. Inhibits the kinase activity of CDK2 bound to cyclin A, but has little inhibitory activity on CDK2 bound to SPDYA. Involved in G1 arrest. Potent inhibitor of cyclin E- and cyclin A-CDK2 complexes. Forms a complex with cyclin type D-CDK4 complexes and is involved in the assembly, stability, and modulation of CCND1-CDK4 complex activation. Acts either as an inhibitor or an activator of cyclin type D-CDK4 complexes depending on its phosphorylation state and/or stoichometry. This chain is Cyclin-dependent kinase inhibitor 1B, found in Homo sapiens (Human).